Consider the following 404-residue polypeptide: Probable tRNA sulfurtransferase (404 aa).

Residues 60-165 (TAVAESLKQV…EEAAYLSYET (106 aa)) form the THUMP domain. Residues 183 to 184 (ML), 208 to 209 (HF), Arg-265, Gly-287, and Gln-296 each bind ATP.

This sequence belongs to the ThiI family.

Its subcellular location is the cytoplasm. The enzyme catalyses [ThiI sulfur-carrier protein]-S-sulfanyl-L-cysteine + a uridine in tRNA + 2 reduced [2Fe-2S]-[ferredoxin] + ATP + H(+) = [ThiI sulfur-carrier protein]-L-cysteine + a 4-thiouridine in tRNA + 2 oxidized [2Fe-2S]-[ferredoxin] + AMP + diphosphate. The catalysed reaction is [ThiS sulfur-carrier protein]-C-terminal Gly-Gly-AMP + S-sulfanyl-L-cysteinyl-[cysteine desulfurase] + AH2 = [ThiS sulfur-carrier protein]-C-terminal-Gly-aminoethanethioate + L-cysteinyl-[cysteine desulfurase] + A + AMP + 2 H(+). It functions in the pathway cofactor biosynthesis; thiamine diphosphate biosynthesis. Functionally, catalyzes the ATP-dependent transfer of a sulfur to tRNA to produce 4-thiouridine in position 8 of tRNAs, which functions as a near-UV photosensor. Also catalyzes the transfer of sulfur to the sulfur carrier protein ThiS, forming ThiS-thiocarboxylate. This is a step in the synthesis of thiazole, in the thiamine biosynthesis pathway. The sulfur is donated as persulfide by IscS. The polypeptide is Probable tRNA sulfurtransferase (Streptococcus pneumoniae serotype 2 (strain D39 / NCTC 7466)).